Consider the following 1680-residue polypeptide: SWI/SNF chromatin-remodeling complex subunit snf22 (1680 aa).

4 disordered regions span residues 61–135 (QQMR…SQAS), 203–258 (NNSF…HSFS), 274–300 (RRGS…ASPY), and 367–427 (YVYR…VPPT). Over residues 62 to 91 (QMRNQSSEFPDAENTNLRKQQDTLPTTGFN) the composition is skewed to polar residues. Low complexity-rich tracts occupy residues 118–127 (GNGNVGLNNP) and 222–233 (SSLPHSFASPSS). Positions 234–245 (TFEQPHTVQSRA) are enriched in polar residues. Low complexity-rich tracts occupy residues 247–258 (SVDTTSSSHSFS), 282–299 (PSTF…LASP), and 374–392 (PPSA…SVDP). A compositionally biased stretch (polar residues) spans 406-419 (PSPSASALKTQSHV). Residues 429–465 (KLNHAQLAMLKSQIVAYNCLNSPNGQVPPAVQQAIFG) form the QLQ domain. Residues 477–489 (SMPFQQNVPQMSS) show a composition bias toward polar residues. Residues 477 to 499 (SMPFQQNVPQMSSVKKDTPTRDA) are disordered. Positions 490 to 499 (VKKDTPTRDA) are enriched in basic and acidic residues. An HSA domain is found at 704 to 776 (QKTEHAMRQK…ARQRLQALRA (73 aa)). A compositionally biased stretch (polar residues) spans 817–832 (SNIHSGNTSGKGSNSA). The interval 817–836 (SNIHSGNTSGKGSNSAELEA) is disordered. Positions 881 to 1046 (LSLYNNNLNG…WALLNFVLPK (166 aa)) constitute a Helicase ATP-binding domain. Position 894–901 (894–901 (DEMGLGKT)) interacts with ATP. Positions 996 to 999 (DEGH) match the DEGH box motif. In terms of domain architecture, Helicase C-terminal spans 1191–1354 (LLDRILPKLF…STPEEREAFL (164 aa)). A disordered region spans residues 1466–1511 (TVDDPSSTLMPRKRGRPRKKTNSGSSLSTPLSQESSLARSGRKNTP). The segment covering 1476 to 1486 (PRKRGRPRKKT) has biased composition (basic residues). Positions 1488–1502 (SGSSLSTPLSQESSL) are enriched in low complexity. Positions 1513-1623 (YKQKALRRYC…KTLKEVIEDL (111 aa)) constitute a Bromo domain.

The protein belongs to the SNF2/RAD54 helicase family. In terms of assembly, component of the SWI/SNF global transcription activator complex composed of at least arp9, arp42, snf5, snf22, snf30, sbf59, sol1, ssr1, ssr2, ssr3, ssr4 and tfg3.

The protein resides in the nucleus. Helicase. Component of the SWI/SNF complex, an ATP-dependent chromatin remodeling complex, required for the positive and negative regulation of gene expression of a large number of genes. It changes chromatin structure by altering DNA-histone contacts within a nucleosome, leading eventually to a change in nucleosome position, thus facilitating or repressing binding of gene-specific transcription factors. In Schizosaccharomyces pombe (strain 972 / ATCC 24843) (Fission yeast), this protein is SWI/SNF chromatin-remodeling complex subunit snf22 (snf22).